The chain runs to 286 residues: Putative transcription factor kapC (286 aa).

Residues 1–10 are compositionally biased toward pro residues; sequence MQPALAPAPH. Residues 1–120 are disordered; sequence MQPALAPAPH…QNRAAQRAFR (120 aa). Over residues 26-40 the composition is skewed to low complexity; that stretch reads HDQLLAAHQHLSHPQ. The span at 41 to 54 shows a compositional bias: pro residues; it reads QPRPQAPATQPPHM. Residues 55–67 show a composition bias toward polar residues; that stretch reads QPNTASPRDQNNI. The segment covering 81–92 has biased composition (pro residues); the sequence is PQTPPQPEPAPQ. The 64-residue stretch at 102 to 165 folds into the bZIP domain; that stretch reads PLSTSKRAAQ…EYIINLQTRL (64 aa). Residues 103-126 form a basic motif region; sequence LSTSKRAAQNRAAQRAFRQRKESY. Over residues 108–118 the composition is skewed to low complexity; the sequence is RAAQNRAAQRA. The leucine-zipper stretch occupies residues 130 to 161; it reads LEEQVKHQEAITEEYKALHAENYQLREYIINL. The tract at residues 197–286 is disordered; the sequence is RGNAASAGPA…QEPDGLPVVS (90 aa). Residues 198-222 are compositionally biased toward low complexity; the sequence is GNAASAGPAPAGPGPQQSQPNQNQG.

It belongs to the bZIP family.

The protein localises to the nucleus. In terms of biological role, putative transcription factor. The sequence is that of Putative transcription factor kapC (kapC) from Aspergillus terreus (strain NIH 2624 / FGSC A1156).